We begin with the raw amino-acid sequence, 422 residues long: Protein IQ-DOMAIN 5 (422 aa).

Positions 23–30 (SKKDENVK) match the Nuclear localization signal motif. 3 IQ domains span residues 87-115 (ENRA…GLVR), 116-138 (LQAL…CMQA), and 139-164 (LVRV…TSQQ). The segment at 137–151 (QALVRVQARVRARRV) is calmodulin-binding. Positions 269 to 422 (GENGMEQSEN…NSDPIKQRLA (154 aa)) are disordered. The span at 273–308 (MEQSENVPKTQIKSVSKMPNTSNLVSGVSSQMTGPC) shows a compositional bias: polar residues. Positions 310 to 327 (SDGDSSSPGISSSIPVVS) are enriched in low complexity. Residues 355–371 (NPKERSREPNRSSKERL) show a composition bias toward basic and acidic residues. The span at 373-387 (LPNSGKSLGSQSTKA) shows a compositional bias: polar residues. Residues 412 to 422 (RNSDPIKQRLA) are compositionally biased toward basic and acidic residues.

This sequence belongs to the IQD family. In terms of assembly, binds to multiple calmodulin (CaM) in the presence of Ca(2+) and CaM-like proteins. In terms of tissue distribution, expressed mostly in vegetative tissues including older parts of the root, cotyledons, leaves and shoot apical meristems (SAM). Present at low levels in pollen, siliques and seeds.

It localises to the nucleus. The protein resides in the cytoplasm. The protein localises to the cytoskeleton. Its subcellular location is the spindle. It is found in the phragmoplast. Its function is as follows. May be involved in cooperative interactions with calmodulins or calmodulin-like proteins. Recruits calmodulin (CaM) calcium sensor proteins to cortical microtubule arrays, thus being a potential scaffold in cellular signaling and trafficking. Binds to microtubules (MTs) and promotes MT assembly and dynamics to modulate pavement cell (PC) morphogenesis via cellulose deposition-dependent anisotropic cell expansion triggered by cellulose synthase complexes (CSCs). May associate with nucleic acids and regulate gene expression at the transcriptional or post-transcriptional level. This is Protein IQ-DOMAIN 5 from Arabidopsis thaliana (Mouse-ear cress).